Here is a 151-residue protein sequence, read N- to C-terminus: UPF0178 protein mma_0312 (151 aa).

The protein belongs to the UPF0178 family.

This chain is UPF0178 protein mma_0312, found in Janthinobacterium sp. (strain Marseille) (Minibacterium massiliensis).